Reading from the N-terminus, the 325-residue chain is DNA-directed RNA polymerase subunit alpha (325 aa).

An alpha N-terminal domain (alpha-NTD) region spans residues 1–231 (MQNSLLKPRI…DQLNVFAALE (231 aa)). An alpha C-terminal domain (alpha-CTD) region spans residues 246–325 (VDPILLRPVD…ENWPPAGLEK (80 aa)).

It belongs to the RNA polymerase alpha chain family. As to quaternary structure, homodimer. The RNAP catalytic core consists of 2 alpha, 1 beta, 1 beta' and 1 omega subunit. When a sigma factor is associated with the core the holoenzyme is formed, which can initiate transcription.

It catalyses the reaction RNA(n) + a ribonucleoside 5'-triphosphate = RNA(n+1) + diphosphate. Functionally, DNA-dependent RNA polymerase catalyzes the transcription of DNA into RNA using the four ribonucleoside triphosphates as substrates. The sequence is that of DNA-directed RNA polymerase subunit alpha from Herminiimonas arsenicoxydans.